The sequence spans 402 residues: Sensor protein kinase FleS (402 aa).

A Histidine kinase domain is found at 188-393; the sequence is SLAHQIRTPL…CATLILPLIP (206 aa). The residue at position 191 (His-191) is a Phosphohistidine; by autocatalysis.

It carries out the reaction ATP + protein L-histidine = ADP + protein N-phospho-L-histidine.. Its function is as follows. Member of the two-component regulatory system FleS/FleR that regulates the expression of multiple genes involved in flagellar synthesis, adhesion, swarming, motility and antibiotic resistance. May function as a membrane-associated protein kinase that phosphorylates FleR in response to environmental signals leading to activation of specific gene promoters. The chain is Sensor protein kinase FleS (fleS) from Pseudomonas aeruginosa (strain ATCC 15692 / DSM 22644 / CIP 104116 / JCM 14847 / LMG 12228 / 1C / PRS 101 / PAO1).